The following is a 129-amino-acid chain: Azurin iso-2 (129 aa).

One can recognise a Plastocyanin-like domain in the interval 1 to 129 (ASCETTVTSG…MMRGTLKLEE (129 aa)). A disulfide bond links Cys3 and Cys26. Cu cation is bound by residues His46, Cys112, His117, and Met121.

The protein localises to the periplasm. In terms of biological role, this methylothroph organism uses azurin in the oxidation of methylamine. Iso-2 is probably the acceptor of electrons from methylamine dehydrogenase. This is Azurin iso-2 from Methylomonas sp. (strain J).